Here is a 295-residue protein sequence, read N- to C-terminus: NAD kinase (295 aa).

Residue D73 is the Proton acceptor of the active site. Residues 73–74 (DG), R78, 146–147 (NE), K157, R174, D176, and 187–192 (TAYSLS) each bind NAD(+).

The protein belongs to the NAD kinase family. Requires a divalent metal cation as cofactor.

The protein resides in the cytoplasm. The enzyme catalyses NAD(+) + ATP = ADP + NADP(+) + H(+). In terms of biological role, involved in the regulation of the intracellular balance of NAD and NADP, and is a key enzyme in the biosynthesis of NADP. Catalyzes specifically the phosphorylation on 2'-hydroxyl of the adenosine moiety of NAD to yield NADP. The sequence is that of NAD kinase from Wigglesworthia glossinidia brevipalpis.